The chain runs to 441 residues: Probable glycine dehydrogenase (decarboxylating) subunit 1 (441 aa).

Belongs to the GcvP family. N-terminal subunit subfamily. As to quaternary structure, the glycine cleavage system is composed of four proteins: P, T, L and H. In this organism, the P 'protein' is a heterodimer of two subunits.

It catalyses the reaction N(6)-[(R)-lipoyl]-L-lysyl-[glycine-cleavage complex H protein] + glycine + H(+) = N(6)-[(R)-S(8)-aminomethyldihydrolipoyl]-L-lysyl-[glycine-cleavage complex H protein] + CO2. Functionally, the glycine cleavage system catalyzes the degradation of glycine. The P protein binds the alpha-amino group of glycine through its pyridoxal phosphate cofactor; CO(2) is released and the remaining methylamine moiety is then transferred to the lipoamide cofactor of the H protein. In Halobacterium salinarum (strain ATCC 700922 / JCM 11081 / NRC-1) (Halobacterium halobium), this protein is Probable glycine dehydrogenase (decarboxylating) subunit 1.